The following is an 849-amino-acid chain: Period circadian protein (849 aa).

Residues 1-13 (MNNMDGSENNAKV) are compositionally biased toward polar residues. Residues 1–79 (MNNMDGSENN…LKKKKQVETL (79 aa)) are disordered. Composition is skewed to low complexity over residues 14 to 27 (SDSA…NSQS) and 35 to 58 (STHS…SSSS). Positions 63-74 (DQKKEKELKKKK) match the Nuclear localization signal motif. PAS domains lie at 166–296 (NGFS…QAVP) and 314–416 (FVIR…YIIE). A disordered region spans residues 680-746 (NNTPSVYEKP…VSTSSQWSSS (67 aa)). Over residues 706–720 (NKHHCPSSRQFRRKQ) the composition is skewed to basic residues. Residues 735–746 (NPVSTSSQWSSS) are compositionally biased toward low complexity.

Forms a heterodimer with timeless (TIM); the complex then translocates into the nucleus. Phosphorylated with a circadian rhythmicity.

It localises to the nucleus. Functionally, involved in the generation of biological rhythms. The biological cycle depends on the rhythmic formation and nuclear localization of the tim-per complex. Light induces the degradation of tim, which promotes elimination of per. Nuclear activity of the heterodimer coordinatively regulates per and tim transcription negative feedback loop. Behaves as a negative element in circadian transcriptional loop. Does not appear to bind DNA, suggesting indirect transcriptional inhibition. Expression exhibits prominent circadian variation in adult heads and in particular in the photoreceptor nuclei. The sequence is that of Period circadian protein (per) from Antheraea pernyi (Chinese oak silk moth).